Here is a 1212-residue protein sequence, read N- to C-terminus: MGITRRGKDKAAAGQAVAGGASGGRARPKKATFETSKKKDVGVSDLTLLSKVSNEAINENLQKRFEGREIYTYIGHVLVSVNPFRDLGIYTDQVLDSYKGKNRLEMPPHVFAIAESAYYNMKAYKDNQCVIISGESGAGKTEAAKRIMQYIASVSGGDSTDIQQIKDMVLATNPLLESFGNAKTLRNNNSSRFGKYLQIHFNSVGEPVGADITNYLLEKSRVVGQITNERNFHIFYQFTKGASEHYRQMFGIQKPETYIYTSRSKCLDVDGIDDLAEFQDTLNAMKVIGLSQEEQDSVFRILAAILWTGNLVFREDDEGYAAVTDQSVVEFLAYLLEVDPQQLIKAITIRILTPRSGEVIESPANVAQAMATRDALAKSLYNNLFDWIVERINQSLKARQPTSNSVGILDIYGFEIFEKNSFEQLCINYVNEKLQQIFIQLTLKAEQDEYAREQIKWTPIKYFDNKIVCDLIESVRPPGVFSALKDATKTAHADPAACDRTFMQSVNGMSNAHLIPRQGSFIIKHYAGDVAYTVDGITDKNKDQLLKGLLGMFQVSQNPFLHTLFPNQVDQDNRKQPPTAGDRIRTSANALVETLMKCQPSYIRTIKPNENKSPTEYNVPNVLHQIKYLGLQENVRIRRAGFAYRQSFEKFVDRFFLLSPATSYAGEYTWQGSYEAAVKQILKDTSIPQEEWQMGVTKAFIKSPETLFALEHMRDRYWHNMATRIQRMWRAYLAYRAESATRIQTFWRKKRTGAEYLQLRDHGHRVLQGRKERRRMSILGSRRFIGDYLGINASSGPGAHIRNAIGIGSNEKTVFSCRGEILEAKFGRSSKASPRILIVTNSKFYVVAQMLVNGQVQITAEKAIPLGAIKFIGASSSRDDWFSLGVGSPQEADPLLNCVLKTEMFTQMERVMPGGFNLKIGDSIEYAKKPGKMQVVKVLKDSPNPVDFYKSGAVHTQQGEPPNSVSRPTPKGKPVPPRPITRGKLIRPGGPNGRPARGTTNRTPQPRPGGASASAVASRPVPQAQPQAQAQVAASIPVRTQQQSQTSSASVRAPPPPPPAAPPAKAKIMAKVLYDFAGQKENEMSIKEGDLIEIVQKENNGWWLAKSGNQQAWVPAAYVEEQKQAPPPVAASRPPPPAPPAANGKNKPLPPAKRPAAGKKPASLQPRDSGMSLNGSDGSRSNTPTPSLGNSLADALLARKQAMAKKDDDDDW.

The tract at residues 1–35 (MGITRRGKDKAAAGQAVAGGASGGRARPKKATFET) is disordered. The 675-residue stretch at 41-715 (VGVSDLTLLS…TLFALEHMRD (675 aa)) folds into the Myosin motor domain. ATP is bound at residue 134–141 (GESGAGKT). Residues 405–487 (SVGILDIYGF…PGVFSALKDA (83 aa)) are actin-binding. IQ domains follow at residues 719–739 (HNMA…RAES) and 740–765 (ATRI…HGHR). In terms of domain architecture, TH1 spans 773–962 (RRRMSILGSR…AVHTQQGEPP (190 aa)). Disordered regions lie at residues 947–1064 (DFYK…APPA) and 1115–1212 (PAAY…DDDW). The span at 954 to 966 (VHTQQGEPPNSVS) shows a compositional bias: polar residues. Composition is skewed to low complexity over residues 987–998 (RPGGPNGRPARG) and 1008–1052 (PGGA…ASVR). The segment covering 1053 to 1062 (APPPPPPAAP) has biased composition (pro residues). The SH3 domain occupies 1065 to 1124 (KAKIMAKVLYDFAGQKENEMSIKEGDLIEIVQKENNGWWLAKSGNQQAWVPAAYVEEQKQ). Residues 1125 to 1140 (APPPVAASRPPPPAPP) show a composition bias toward pro residues. A compositionally biased stretch (polar residues) spans 1171 to 1190 (MSLNGSDGSRSNTPTPSLGN).

This sequence belongs to the TRAFAC class myosin-kinesin ATPase superfamily. Myosin family.

The protein localises to the cytoplasm. It localises to the cytoskeleton. The protein resides in the actin patch. Functionally, type-I myosin implicated in the organization of the actin cytoskeleton. Required for proper actin cytoskeleton polarization. At the cell cortex, assembles in patch-like structures together with proteins from the actin-polymerizing machinery and promotes actin assembly. Functions as actin nucleation-promoting factor (NPF) for the Arp2/3 complex. The polypeptide is Myosin-1 (MYO1) (Pyricularia oryzae (strain 70-15 / ATCC MYA-4617 / FGSC 8958) (Rice blast fungus)).